A 75-amino-acid chain; its full sequence is Protein RALF-like 9 (75 aa).

Positions 1 to 28 (MGMSKSIKVILSLALVVFLALAATKVEA) are cleaved as a signal peptide. Disulfide bonds link C46/C54 and C66/C72.

It belongs to the plant rapid alkalinization factor (RALF) family.

The protein localises to the secreted. Functionally, cell signaling peptide that may regulate plant stress, growth, and development. Mediates a rapid alkalinization of extracellular space by mediating a transient increase in the cytoplasmic Ca(2+) concentration leading to a calcium-dependent signaling events through a cell surface receptor and a concomitant activation of some intracellular mitogen-activated protein kinases. The sequence is that of Protein RALF-like 9 (RALFL9) from Arabidopsis thaliana (Mouse-ear cress).